Here is a 729-residue protein sequence, read N- to C-terminus: Fibroblast growth factor receptor homolog 1 (729 aa).

The signal sequence occupies residues 1 to 36 (MAAAWSWRASHSTITMTSGSLVVLFLLLSIWQPAVQ). The Extracellular portion of the chain corresponds to 37–309 (VEGRRQMANS…VASGSLHSTS (273 aa)). The interval 56–101 (ARSQNKTPAITNNANQSSTSSADLDDGAADDDDNKADLPVNVSSKP) is disordered. Residues 66 to 77 (TNNANQSSTSSA) show a composition bias toward low complexity. Asn70 carries N-linked (GlcNAc...) asparagine glycosylation. The span at 78–89 (DLDDGAADDDDN) shows a compositional bias: acidic residues. N-linked (GlcNAc...) asparagine glycans are attached at residues Asn96, Asn134, Asn140, Asn171, Asn207, Asn213, Asn242, Asn246, and Asn282. 2 consecutive Ig-like C2-type domains span residues 106–192 (PKKM…VIVS) and 203–279 (TGPL…NSLG). Cys125 and Cys174 are joined by a disulfide. Cys220 and Cys272 are joined by a disulfide. Residues 310–330 (FVYIFVFGGLIFIFMTTLFVF) traverse the membrane as a helical segment. The Cytoplasmic segment spans residues 331–729 (YAIRKMKHEK…TDNLQKWCNY (399 aa)). Positions 416–692 (LVLGATLGEG…EIVEYMDKLL (277 aa)) constitute a Protein kinase domain. ATP is bound by residues 422–430 (LGEGAFGRV) and Lys443. Residue Asp556 is the Proton acceptor of the active site. Tyr587 carries the post-translational modification Phosphotyrosine; by autocatalysis.

Belongs to the protein kinase superfamily. Tyr protein kinase family. Fibroblast growth factor receptor subfamily. In early embryos, expression is specific to mesodermal primordium and invaginated mesodermal cells. At later stages, expression is seen in putative muscle precursor cells and in the CNS.

It localises to the membrane. The catalysed reaction is L-tyrosyl-[protein] + ATP = O-phospho-L-tyrosyl-[protein] + ADP + H(+). May be required for patterning of muscle precursor cells. May be essential for generation of mesodermal and endodermal layers, invaginations of various types of cells and CNS formation. This is Fibroblast growth factor receptor homolog 1 (htl) from Drosophila melanogaster (Fruit fly).